The following is a 398-amino-acid chain: MESVLSKYENQITIFADYLEEFPDTDELVWILGKQHLLKTEKSKLLSDISARLWFTYRRKFSPIGGTGPSSDAGWGCMLRCGQMMLAQALICRHLGRDWNWEKQKEQPKEYQRILQCFLDRKDCCYSIHQMAQMGVGEGKSIGEWFGPNTVAQVLKKLALFDEWNSLAVYVSMDNTVVIEDIKKMCRTLSLSADTPAERPLESLTASNQSKGPSACCTAWKPLLLIVPLRLGINQINPVYVDAFKECFKMPQSLGALGGKPNNAYYFIGFLGDELIFLDPHTTQTFVDTEENGTADDQTFHCLQPPQRMNILNLDPSVALGFFCKEEKDFDSWCSLVQKEILKENLRMFELVQKHPSHWPPFVPPAKPEVTTTGAEFIDSTEQLEEFDLEEDFEILSI.

Cys77 (nucleophile) is an active-site residue. Catalysis depends on residues Asp279 and His281. The LIR signature appears at 393-396 (FEIL).

This sequence belongs to the peptidase C54 family. Interacts with ATG9A; the interaction is direct.

The protein resides in the cytoplasm. It carries out the reaction [protein]-C-terminal L-amino acid-glycyl-phosphatidylethanolamide + H2O = [protein]-C-terminal L-amino acid-glycine + a 1,2-diacyl-sn-glycero-3-phosphoethanolamine. Inhibited by N-ethylmaleimide. Redox-regulated during autophagy since reducing conditions activate ATG4A whereas an oxidizing environment such as the presence of H(2)O(2) inhibits its activity. Its function is as follows. Cysteine protease that plays a key role in autophagy by mediating both proteolytic activation and delipidation of ATG8 family proteins. The protease activity is required for proteolytic activation of ATG8 family proteins: cleaves the C-terminal amino acid of ATG8 proteins to reveal a C-terminal glycine. Exposure of the glycine at the C-terminus is essential for ATG8 proteins conjugation to phosphatidylethanolamine (PE) and insertion to membranes, which is necessary for autophagy. Preferred substrate is GABARAPL2 followed by MAP1LC3A and GABARAP. Protease activity is also required to counteract formation of high-molecular weight conjugates of ATG8 proteins (ATG8ylation): acts as a deubiquitinating-like enzyme that removes ATG8 conjugated to other proteins, such as ATG3. In addition to the protease activity, also mediates delipidation of ATG8 family proteins. Catalyzes delipidation of PE-conjugated forms of ATG8 proteins during macroautophagy. Compared to ATG4B, the major protein for proteolytic activation of ATG8 proteins, shows weaker ability to cleave the C-terminal amino acid of ATG8 proteins, while it displays stronger delipidation activity. Involved in phagophore growth during mitophagy independently of its protease activity and of ATG8 proteins: acts by regulating ATG9A trafficking to mitochondria and promoting phagophore-endoplasmic reticulum contacts during the lipid transfer phase of mitophagy. Functionally, (Microbial infection) Mediates cleavage of an ATG8 protein homolog coded in the genome of cytopathogenic bovine viral diarrhea virus (BVDV). The chain is Cysteine protease ATG4A from Bos taurus (Bovine).